We begin with the raw amino-acid sequence, 170 residues long: Adenine phosphoribosyltransferase (170 aa).

Belongs to the purine/pyrimidine phosphoribosyltransferase family. Homodimer.

The protein resides in the cytoplasm. The enzyme catalyses AMP + diphosphate = 5-phospho-alpha-D-ribose 1-diphosphate + adenine. It functions in the pathway purine metabolism; AMP biosynthesis via salvage pathway; AMP from adenine: step 1/1. Its function is as follows. Catalyzes a salvage reaction resulting in the formation of AMP, that is energically less costly than de novo synthesis. The chain is Adenine phosphoribosyltransferase from Bacillus licheniformis (strain ATCC 14580 / DSM 13 / JCM 2505 / CCUG 7422 / NBRC 12200 / NCIMB 9375 / NCTC 10341 / NRRL NRS-1264 / Gibson 46).